Consider the following 270-residue polypeptide: tRNA pseudouridine synthase A (270 aa).

Catalysis depends on D51, which acts as the Nucleophile. Y109 provides a ligand contact to substrate.

This sequence belongs to the tRNA pseudouridine synthase TruA family. As to quaternary structure, homodimer.

It catalyses the reaction uridine(38/39/40) in tRNA = pseudouridine(38/39/40) in tRNA. Formation of pseudouridine at positions 38, 39 and 40 in the anticodon stem and loop of transfer RNAs. The polypeptide is tRNA pseudouridine synthase A (Burkholderia orbicola (strain MC0-3)).